We begin with the raw amino-acid sequence, 497 residues long: Acetyl-coenzyme A carboxylase carboxyl transferase subunit beta (497 aa).

Residues Leu217 to Tyr489 form the CoA carboxyltransferase N-terminal domain. Zn(2+) contacts are provided by Cys221, Cys224, Cys240, and Cys243. The C4-type zinc-finger motif lies at Cys221–Cys243.

It belongs to the AccD/PCCB family. As to quaternary structure, acetyl-CoA carboxylase is a heterohexamer composed of biotin carboxyl carrier protein, biotin carboxylase and 2 subunits each of ACCase subunit alpha and ACCase plastid-coded subunit beta (accD). It depends on Zn(2+) as a cofactor.

It localises to the plastid. The catalysed reaction is N(6)-carboxybiotinyl-L-lysyl-[protein] + acetyl-CoA = N(6)-biotinyl-L-lysyl-[protein] + malonyl-CoA. It participates in lipid metabolism; malonyl-CoA biosynthesis; malonyl-CoA from acetyl-CoA: step 1/1. Component of the acetyl coenzyme A carboxylase (ACC) complex. Biotin carboxylase (BC) catalyzes the carboxylation of biotin on its carrier protein (BCCP) and then the CO(2) group is transferred by the transcarboxylase to acetyl-CoA to form malonyl-CoA. This chain is Acetyl-coenzyme A carboxylase carboxyl transferase subunit beta, found in Cuscuta reflexa (Southern Asian dodder).